Consider the following 388-residue polypeptide: S-adenosylmethionine synthase (388 aa).

His-17 provides a ligand contact to ATP. Residue Asp-19 coordinates Mg(2+). Glu-45 is a K(+) binding site. Glu-58 and Gln-106 together coordinate L-methionine. Residues 106-116 (QSAHIAQGVDK) are flexible loop. ATP contacts are provided by residues 166 to 168 (DAK), Asp-241, 247 to 248 (RK), Ala-264, and Lys-268. Residue Asp-241 coordinates L-methionine. Lys-272 provides a ligand contact to L-methionine.

Belongs to the AdoMet synthase family. As to quaternary structure, homotetramer; dimer of dimers. Mg(2+) serves as cofactor. The cofactor is K(+).

Its subcellular location is the cytoplasm. The enzyme catalyses L-methionine + ATP + H2O = S-adenosyl-L-methionine + phosphate + diphosphate. It functions in the pathway amino-acid biosynthesis; S-adenosyl-L-methionine biosynthesis; S-adenosyl-L-methionine from L-methionine: step 1/1. Functionally, catalyzes the formation of S-adenosylmethionine (AdoMet) from methionine and ATP. The overall synthetic reaction is composed of two sequential steps, AdoMet formation and the subsequent tripolyphosphate hydrolysis which occurs prior to release of AdoMet from the enzyme. The protein is S-adenosylmethionine synthase of Cereibacter sphaeroides (strain ATCC 17023 / DSM 158 / JCM 6121 / CCUG 31486 / LMG 2827 / NBRC 12203 / NCIMB 8253 / ATH 2.4.1.) (Rhodobacter sphaeroides).